The chain runs to 104 residues: uncharacterized protein (104 aa).

This is an uncharacterized protein from Escherichia coli (Bacteriophage T4).